We begin with the raw amino-acid sequence, 297 residues long: Protein LRATD1 (297 aa).

Position 38 is a phosphoserine (Ser-38). The LRAT domain occupies 138–233 (PAPEPPAPAP…CRFGKREFKA (96 aa)).

Belongs to the LRATD family.

Its subcellular location is the cytoplasm. In terms of biological role, may play a role in cell morphology and motility. The chain is Protein LRATD1 (LRATD1) from Bos taurus (Bovine).